A 190-amino-acid chain; its full sequence is Inosine triphosphate pyrophosphatase (190 aa).

9–14 (TGNAKK) provides a ligand contact to ITP. Mg(2+) is bound at residue E39. Residues K51, 67 to 68 (DT), K84, 144 to 147 (FGWD), K167, and 172 to 173 (HR) contribute to the ITP site.

The protein belongs to the HAM1 NTPase family. As to quaternary structure, homodimer. Mg(2+) is required as a cofactor. It depends on Mn(2+) as a cofactor.

The protein localises to the cytoplasm. The catalysed reaction is ITP + H2O = IMP + diphosphate + H(+). It carries out the reaction dITP + H2O = dIMP + diphosphate + H(+). It catalyses the reaction XTP + H2O = XMP + diphosphate + H(+). Functionally, pyrophosphatase that hydrolyzes non-canonical purine nucleotides such as inosine triphosphate (ITP), deoxyinosine triphosphate (dITP) or xanthosine 5'-triphosphate (XTP) to their respective monophosphate derivatives. The enzyme does not distinguish between the deoxy- and ribose forms. Probably excludes non-canonical purines from RNA and DNA precursor pools, thus preventing their incorporation into RNA and DNA and avoiding chromosomal lesions. The polypeptide is Inosine triphosphate pyrophosphatase (Pediculus humanus subsp. corporis (Body louse)).